Reading from the N-terminus, the 242-residue chain is Aspartate/glutamate leucyltransferase (242 aa).

Belongs to the R-transferase family. Bpt subfamily.

Its subcellular location is the cytoplasm. The enzyme catalyses N-terminal L-glutamyl-[protein] + L-leucyl-tRNA(Leu) = N-terminal L-leucyl-L-glutamyl-[protein] + tRNA(Leu) + H(+). It carries out the reaction N-terminal L-aspartyl-[protein] + L-leucyl-tRNA(Leu) = N-terminal L-leucyl-L-aspartyl-[protein] + tRNA(Leu) + H(+). Functions in the N-end rule pathway of protein degradation where it conjugates Leu from its aminoacyl-tRNA to the N-termini of proteins containing an N-terminal aspartate or glutamate. The sequence is that of Aspartate/glutamate leucyltransferase from Chromobacterium violaceum (strain ATCC 12472 / DSM 30191 / JCM 1249 / CCUG 213 / NBRC 12614 / NCIMB 9131 / NCTC 9757 / MK).